Here is a 363-residue protein sequence, read N- to C-terminus: 3-dehydroquinate synthase (363 aa).

NAD(+)-binding positions include 70 to 75 (SGETSK), 104 to 108 (GVIGD), 128 to 129 (TT), K141, K150, and 168 to 171 (TLDT). The Zn(2+) site is built by E183, H245, and H262.

Belongs to the sugar phosphate cyclases superfamily. Dehydroquinate synthase family. Requires Co(2+) as cofactor. Zn(2+) is required as a cofactor. NAD(+) serves as cofactor.

It is found in the cytoplasm. It carries out the reaction 7-phospho-2-dehydro-3-deoxy-D-arabino-heptonate = 3-dehydroquinate + phosphate. Its pathway is metabolic intermediate biosynthesis; chorismate biosynthesis; chorismate from D-erythrose 4-phosphate and phosphoenolpyruvate: step 2/7. In terms of biological role, catalyzes the conversion of 3-deoxy-D-arabino-heptulosonate 7-phosphate (DAHP) to dehydroquinate (DHQ). The protein is 3-dehydroquinate synthase of Alkaliphilus oremlandii (strain OhILAs) (Clostridium oremlandii (strain OhILAs)).